The sequence spans 254 residues: Phosphoribosylaminoimidazole-succinocarboxamide synthase (254 aa).

The protein belongs to the SAICAR synthetase family.

The catalysed reaction is 5-amino-1-(5-phospho-D-ribosyl)imidazole-4-carboxylate + L-aspartate + ATP = (2S)-2-[5-amino-1-(5-phospho-beta-D-ribosyl)imidazole-4-carboxamido]succinate + ADP + phosphate + 2 H(+). Its pathway is purine metabolism; IMP biosynthesis via de novo pathway; 5-amino-1-(5-phospho-D-ribosyl)imidazole-4-carboxamide from 5-amino-1-(5-phospho-D-ribosyl)imidazole-4-carboxylate: step 1/2. This chain is Phosphoribosylaminoimidazole-succinocarboxamide synthase, found in Rhodospirillum centenum (strain ATCC 51521 / SW).